Here is a 300-residue protein sequence, read N- to C-terminus: Protoheme IX farnesyltransferase 1 (300 aa).

8 consecutive transmembrane segments (helical) span residues 28–48 (VVAL…PGAV), 50–70 (VQPL…AAAY), 106–126 (AMAI…TAWL), 150–170 (IVVG…AITG), 176–196 (ALLL…ALAI), 222–242 (CIML…LVGM), 243–263 (CGPL…YKAW), and 280–300 (FSIY…YLWS).

This sequence belongs to the UbiA prenyltransferase family. Protoheme IX farnesyltransferase subfamily.

It is found in the cell inner membrane. It catalyses the reaction heme b + (2E,6E)-farnesyl diphosphate + H2O = Fe(II)-heme o + diphosphate. It participates in porphyrin-containing compound metabolism; heme O biosynthesis; heme O from protoheme: step 1/1. In terms of biological role, converts heme B (protoheme IX) to heme O by substitution of the vinyl group on carbon 2 of heme B porphyrin ring with a hydroxyethyl farnesyl side group. This chain is Protoheme IX farnesyltransferase 1, found in Shewanella loihica (strain ATCC BAA-1088 / PV-4).